The sequence spans 315 residues: Olfactory receptor 10A4 (315 aa).

Topologically, residues 1–26 are extracellular; the sequence is MMWENWTIVSEFVLVSFSALSTELQA. An N-linked (GlcNAc...) asparagine glycan is attached at Asn-5. Residues 27-47 form a helical membrane-spanning segment; sequence LLFLLFLTIYLVTLMGNVLII. Residues 48 to 55 lie on the Cytoplasmic side of the membrane; the sequence is LVTIADSA. Residues 56-76 form a helical membrane-spanning segment; sequence LQSPMYFFLRNLSFLEIGFNL. Residues 77-100 are Extracellular-facing; that stretch reads VIVPKMLGTLIIQDTTISFLGCAT. The cysteines at positions 98 and 190 are disulfide-linked. The chain crosses the membrane as a helical span at residues 101–121; sequence QMYFFFFFGAAECCLLATMAY. The Cytoplasmic segment spans residues 122-140; the sequence is DRYVAICDPLHYPVIMGHI. A helical membrane pass occupies residues 141–161; the sequence is SCAQLAAASWFSGFSVATVQT. The Extracellular segment spans residues 162–198; it reads TWIFSFPFCGPNRVNHFFCDSPPVIALVCADTSVFEL. Residues 199 to 218 form a helical membrane-spanning segment; sequence EALTATVLFILFPFLLILGS. At 219 to 238 the chain is on the cytoplasmic side; that stretch reads YVRILSTIFRMPSAEGKHQA. The chain crosses the membrane as a helical span at residues 239–259; sequence FSTCSAHLLVVSLFYSTAILT. Residues 260-272 lie on the Extracellular side of the membrane; it reads YFRPQSSASSESK. The helical transmembrane segment at 273–293 threads the bilayer; it reads KLLSLSSTVVTPMLNPIIYSS. At 294–315 the chain is on the cytoplasmic side; the sequence is RNKEVKAALKRLIHRTLGSQKL.

The protein belongs to the G-protein coupled receptor 1 family. In terms of tissue distribution, expressed in the tongue.

It is found in the cell membrane. Its function is as follows. Odorant receptor (Potential). May be involved in taste perception. This is Olfactory receptor 10A4 (OR10A4) from Homo sapiens (Human).